We begin with the raw amino-acid sequence, 165 residues long: Lithostathine-1 (165 aa).

A signal peptide spans 1–21 (MARNAYFILLSCLIVLSPSQG). Gln-22 is modified (pyrrolidone carboxylic acid). The 131-residue stretch at 33-163 (ISCPEGSNAY…DAQYSFVCKF (131 aa)) folds into the C-type lectin domain. Cystine bridges form between Cys-35/Cys-46, Cys-63/Cys-161, and Cys-136/Cys-153. A glycan (N-linked (GlcNAc...) asparagine) is linked at Asn-129.

Expressed only in regenerating islets and normal exocrine pancreas, but not in normal pancreatic islets. Expressed strongly in pancreas, moderately in gall bladder, and weakly in liver.

It is found in the secreted. Functionally, might act as an inhibitor of spontaneous calcium carbonate precipitation. The polypeptide is Lithostathine-1 (Reg1) (Mus musculus (Mouse)).